The primary structure comprises 221 residues: ATP synthase subunit a 1 (221 aa).

Helical transmembrane passes span 20–40, 78–98, 108–128, 174–194, and 196–216; these read LTIVTTWALMLLLAGGSALIT, YLPFIAALFLFIATANLCTVI, LSTTAALALSVFIAVPLFGIA, MILVILLTISPLVFPVLMNIL, and LLTGMVQAYIFSILATVYIAA.

The protein belongs to the ATPase A chain family. F-type ATPases have 2 components, CF(1) - the catalytic core - and CF(0) - the membrane proton channel. CF(1) has five subunits: alpha(3), beta(3), gamma(1), delta(1), epsilon(1). CF(0) has four main subunits: a, b, b' and c.

It is found in the cell inner membrane. Its function is as follows. Key component of the proton channel; it plays a direct role in the translocation of protons across the membrane. This chain is ATP synthase subunit a 1, found in Chlorobaculum tepidum (strain ATCC 49652 / DSM 12025 / NBRC 103806 / TLS) (Chlorobium tepidum).